Consider the following 134-residue polypeptide: ATP synthase epsilon chain (134 aa).

This sequence belongs to the ATPase epsilon chain family. In terms of assembly, F-type ATPases have 2 components, CF(1) - the catalytic core - and CF(0) - the membrane proton channel. CF(1) has five subunits: alpha(3), beta(3), gamma(1), delta(1), epsilon(1). CF(0) has three main subunits: a, b and c. In this bacterium the a and b subunits are transcribed but do not seem to be translated, thus the ATP synthase consists of the alpha, beta, gamma, delta, epsilon and c subunits.

It is found in the cell membrane. Its function is as follows. Produces ATP from ADP in the presence of a proton gradient across the membrane. This chain is ATP synthase epsilon chain, found in Moorella thermoacetica (strain ATCC 39073 / JCM 9320).